The chain runs to 339 residues: MFESVYNLPEQIQKAYEIGKNISVNVKAEDIDKVVITGLGGSAIGGNLLRVFVLDKCKIPVIVNRDYVLPAYVDSKTLVIASSYSGNTEETLSAYQDAKAKGAKIIAITTGGKLKEFAEKDGFDVITIPSGLQPRAALGYSFIPLLMLFVKLGLIEPVDDQIEETVKVLSDLRERYKPEVPEEKNLAKRLTLKLWNKLPIIYGISGTTEVIAERWKGQICENSKSPAYFNVFSELNHNEIVGTESPKHILGLFEIVMLHDTEDHKRNAIRMDITKDLIKGVVSGVNDIYSIGNSRLARMFSLIYLGDYVSLYLATLYQNDPTPVKKIDILKNKLAEIKD.

The region spanning 22–164 is the SIS domain; that stretch reads ISVNVKAEDI…IEPVDDQIEE (143 aa). Residues G41, S42, S83, S85, T88, and R135 each contribute to the D-fructose 6-phosphate site. The active-site Proton acceptor is the E221. D-fructose 6-phosphate-binding residues include H237 and K331. H237 acts as the Proton donor in catalysis. K331 (proton acceptor) is an active-site residue.

Belongs to the PGI/PMI family. Homodimer.

It catalyses the reaction alpha-D-glucose 6-phosphate = beta-D-fructose 6-phosphate. It carries out the reaction D-mannose 6-phosphate = D-fructose 6-phosphate. Functionally, dual specificity isomerase that catalyzes the isomerization of both glucose-6-phosphate and mannose-6-phosphate to fructose-6-phosphate. This is Bifunctional phosphoglucose/phosphomannose isomerase from Caldicellulosiruptor bescii (strain ATCC BAA-1888 / DSM 6725 / KCTC 15123 / Z-1320) (Anaerocellum thermophilum).